A 207-amino-acid polypeptide reads, in one-letter code: MDKQLRYAIALTGSIGSGKSTFVSLLSLYGYQSICADSIAHKVLEEHSAEVIAYFGNEILQSDNTINRKVLGNIIFASSSKREELQAILHPHIQKAILTQAQQLEEKKVWYFIDIPLFFEVGGKEAYPVARSLVIYTPKAKAIERIMKRNNFTFEEAKARIDAQMPIENKCRLADDIINNEGDLRTLQHNAETYIQSLPCVDCVQSS.

In terms of domain architecture, DPCK spans A8 to S207. G16–T21 is an ATP binding site.

Belongs to the CoaE family.

The protein resides in the cytoplasm. It catalyses the reaction 3'-dephospho-CoA + ATP = ADP + CoA + H(+). The protein operates within cofactor biosynthesis; coenzyme A biosynthesis; CoA from (R)-pantothenate: step 5/5. Its function is as follows. Catalyzes the phosphorylation of the 3'-hydroxyl group of dephosphocoenzyme A to form coenzyme A. The polypeptide is Dephospho-CoA kinase (Helicobacter hepaticus (strain ATCC 51449 / 3B1)).